Here is a 160-residue protein sequence, read N- to C-terminus: Probable NADH dehydrogenase [ubiquinone] 1 beta subcomplex subunit 2, mitochondrial (160 aa).

It belongs to the complex I NDUFB2 subunit family. Complex I is composed of 45 different subunits.

The protein localises to the mitochondrion inner membrane. Accessory subunit of the mitochondrial membrane respiratory chain NADH dehydrogenase (Complex I), that is believed not to be involved in catalysis. Complex I functions in the transfer of electrons from NADH to the respiratory chain. The immediate electron acceptor for the enzyme is believed to be ubiquinone. The polypeptide is Probable NADH dehydrogenase [ubiquinone] 1 beta subcomplex subunit 2, mitochondrial (Caenorhabditis briggsae).